The primary structure comprises 200 residues: NADH-quinone oxidoreductase subunit C (200 aa).

It belongs to the complex I 30 kDa subunit family. NDH-1 is composed of 14 different subunits. Subunits NuoB, C, D, E, F, and G constitute the peripheral sector of the complex.

Its subcellular location is the cell inner membrane. It carries out the reaction a quinone + NADH + 5 H(+)(in) = a quinol + NAD(+) + 4 H(+)(out). NDH-1 shuttles electrons from NADH, via FMN and iron-sulfur (Fe-S) centers, to quinones in the respiratory chain. The immediate electron acceptor for the enzyme in this species is believed to be ubiquinone. Couples the redox reaction to proton translocation (for every two electrons transferred, four hydrogen ions are translocated across the cytoplasmic membrane), and thus conserves the redox energy in a proton gradient. The protein is NADH-quinone oxidoreductase subunit C of Rhizobium johnstonii (strain DSM 114642 / LMG 32736 / 3841) (Rhizobium leguminosarum bv. viciae).